Consider the following 494-residue polypeptide: Cytochrome P450 2A4 (494 aa).

Serine 131 is modified (phosphoserine). The residue at position 379 (lysine 379) is an N6-acetyllysine. Position 439 (cysteine 439) interacts with heme.

The protein belongs to the cytochrome P450 family. The cofactor is heme. As to expression, kidney and lung. Expressed in liver, with a strong circadian rhythmicity. Circadian expression is regulated by DBP.

It localises to the endoplasmic reticulum membrane. The protein resides in the microsome membrane. The enzyme catalyses an organic molecule + reduced [NADPH--hemoprotein reductase] + O2 = an alcohol + oxidized [NADPH--hemoprotein reductase] + H2O + H(+). In terms of biological role, highly active in the 15-alpha-hydroxylation of testosterone. Also active in the 15-alpha-hydroxylation of progesterone and androstenedione. Little or no activity on corticosterone, pregnenolone, dehydroepiandrosterone, estradiol or estriol. In Mus musculus (Mouse), this protein is Cytochrome P450 2A4 (Cyp2a4).